Here is a 197-residue protein sequence, read N- to C-terminus: MSETQNSTSQKAMDEDNKAASQTMPNTQDKNYEDELTQVALALVEDVINYAVKIVEEERNPLKNIKWMTHGEFTVEKGLKQIDEYFSKCVSKKCWAHGVEFVERKDLIHSFLYIYYVHWSISTADLPVARISAGTYFTMKVSKTKPPDAPIVVSYVGDHQALVHRPGMVRFRENWQKNLTDAKYSFMESFPFLFNRV.

Composition is skewed to polar residues over residues 1-11 and 19-29; these read MSETQNSTSQK and AASQTMPNTQD. Residues 1 to 29 are disordered; the sequence is MSETQNSTSQKAMDEDNKAASQTMPNTQD. The tract at residues 35–52 is RII-binding; that stretch reads ELTQVALALVEDVINYAV.

As to quaternary structure, binds to type II regulatory subunits (RII). Present in cilia (at protein level). Expressed in tissues containing axoneme-based organelles (cilia and/or flagella): trachea and testis. Highly expressed in airway cilia.

The protein localises to the cytoplasm. Functionally, binds to type II regulatory subunits of protein kinase A and anchors/targets them. The protein is A-kinase anchor protein 14 (AKAP14) of Homo sapiens (Human).